The chain runs to 1026 residues: Exportin-T (1026 aa).

Belongs to the exportin family.

It is found in the nucleus. It localises to the cytoplasm. Functionally, tRNA nucleus export receptor which facilitates tRNA translocation across the nuclear pore complex. Involved in pre-tRNA splicing, probably by affecting the interaction of pre-tRNA with splicing endonuclease. This is Exportin-T (los1) from Aspergillus oryzae (strain ATCC 42149 / RIB 40) (Yellow koji mold).